We begin with the raw amino-acid sequence, 453 residues long: Na(+)/H(+) antiporter NhaA 2 (453 aa).

11 helical membrane passes run 32–52 (GALLLAGAVIALIWANSPGAA), 71–91 (LSLAAWAKDGLLAVFFFVAGL), 109–129 (AVPIAAAVGGVLAPAAVYVLI), 140–160 (GWAIPAATDIAFALAVLAVIG), 169–189 (VFLLTLAVVDDLIAIMIIAVF), 193–213 (NLSVTPLLATALPLVAFAILL), 232–252 (ALVHASGVHATVAGVLLALVV), 284–304 (AVPVFALMSAGVAIGGLGGLV), 310–330 (PVAIGVIAGLVIGKPLGVIAV), 356–376 (MLAGIGFTVSLLIGELSFAAG), and 382–402 (HVKIAIVTGSLIAAVLAAVIL). Residues 409 to 453 (GSRGNDATTRDPDQTRVGTATQRTTPDHPTPAATDANQPARSPAP) form a disordered region.

The protein belongs to the NhaA Na(+)/H(+) (TC 2.A.33) antiporter family.

The protein resides in the cell membrane. It carries out the reaction Na(+)(in) + 2 H(+)(out) = Na(+)(out) + 2 H(+)(in). Functionally, na(+)/H(+) antiporter that extrudes sodium in exchange for external protons. The polypeptide is Na(+)/H(+) antiporter NhaA 2 (Salinispora tropica (strain ATCC BAA-916 / DSM 44818 / JCM 13857 / NBRC 105044 / CNB-440)).